We begin with the raw amino-acid sequence, 226 residues long: EEF1A lysine methyltransferase 3 (226 aa).

S-adenosyl-L-methionine is bound by residues tryptophan 57, 83–85, aspartate 104, tryptophan 133, and alanine 150; that span reads GAG.

This sequence belongs to the methyltransferase superfamily. METTL21 family. As to quaternary structure, interacts with members of the heat shock protein 70 and 90 families and of the TCP-1 chaperonin family, as well as with HSPD1, STIP1 and tubulin; at least some of these proteins may be methylation substrates.

It is found in the cytoplasm. The protein resides in the cytoskeleton. Its subcellular location is the microtubule organizing center. It localises to the centrosome. The catalysed reaction is L-lysyl-[protein] + 3 S-adenosyl-L-methionine = N(6),N(6),N(6)-trimethyl-L-lysyl-[protein] + 3 S-adenosyl-L-homocysteine + 3 H(+). It carries out the reaction L-lysyl-[protein] + S-adenosyl-L-methionine = N(6)-methyl-L-lysyl-[protein] + S-adenosyl-L-homocysteine + H(+). It catalyses the reaction N(6)-methyl-L-lysyl-[protein] + S-adenosyl-L-methionine = N(6),N(6)-dimethyl-L-lysyl-[protein] + S-adenosyl-L-homocysteine + H(+). The enzyme catalyses N(6),N(6)-dimethyl-L-lysyl-[protein] + S-adenosyl-L-methionine = N(6),N(6),N(6)-trimethyl-L-lysyl-[protein] + S-adenosyl-L-homocysteine + H(+). Its function is as follows. Protein-lysine methyltransferase that selectively mono-, di- and trimethylates 'Lys-165' of the translation elongation factors EEF1A1 and EEF1A2 in an aminoacyl-tRNA and GTP-dependent manner. EEF1A1 methylation by EEF1AKMT3 is dynamic as well as inducible by stress conditions, such as ER-stress, and plays a regulatory role on mRNA translation. This chain is EEF1A lysine methyltransferase 3, found in Homo sapiens (Human).